A 621-amino-acid polypeptide reads, in one-letter code: DnaJ homolog subfamily C member 2 (621 aa).

Residue methionine 1 is modified to N-acetylmethionine. Serine 47, serine 49, serine 60, and serine 63 each carry phosphoserine. Residues 88–161 (DHYAVLGLGH…VKRRAFNSVD (74 aa)) enclose the J domain. Residues 160–250 (VDPTFDNSVP…RDERRWIEKQ (91 aa)) are ZRF1-UBD. Serine 183 carries the phosphoserine modification. Disordered regions lie at residues 294 to 315 (EKKA…QRQA) and 426 to 453 (KEEA…GSKH). SANT domains follow at residues 449 to 511 (NGSK…KLDP) and 549 to 604 (TDFT…EMVK).

As to quaternary structure, component of ribosome-associated complex (RAC), a heterodimer composed of Hsp70/DnaK-type chaperone HSPA14 and Hsp40/DnaJ-type chaperone DNAJC2. Interacts (via ZRF1-UBD region) with ID1. Phosphorylated in M (mitotic) phase.

Its subcellular location is the nucleus. The protein localises to the cytoplasm. The protein resides in the cytosol. Functionally, acts both as a chaperone in the cytosol and as a chromatin regulator in the nucleus. When cytosolic, acts as a molecular chaperone: component of the ribosome-associated complex (RAC), a complex involved in folding or maintaining nascent polypeptides in a folding-competent state. In the RAC complex, stimulates the ATPase activity of the ribosome-associated pool of Hsp70-type chaperones HSPA14 that bind to the nascent polypeptide chain. When nuclear, mediates the switching from polycomb-repressed genes to an active state: specifically recruited at histone H2A ubiquitinated at 'Lys-119' (H2AK119ub), and promotes the displacement of the polycomb PRC1 complex from chromatin, thereby facilitating transcription activation. The chain is DnaJ homolog subfamily C member 2 (DNAJC2) from Bos taurus (Bovine).